Consider the following 238-residue polypeptide: Monocyte to macrophage differentiation factor (238 aa).

Residues 1 to 28 (MQFRNRFQRFMNHRAPANGRYKPTCYEH) lie on the Cytoplasmic side of the membrane. Residues 29-49 (AANCYTHAFLIVPAIVGSALL) form a helical membrane-spanning segment. The Lumenal segment spans residues 50 to 61 (HRLSDDCWEKIT). The chain crosses the membrane as a helical span at residues 62 to 82 (AWIYGMGLCALFIVSTVFHIV). At 83–101 (SWKKSHLRTVEHCFHMCDR) the chain is on the cytoplasmic side. A helical membrane pass occupies residues 102-122 (MVIYFFIAASYAPWLNLRELG). P123 is a topological domain (lumenal). A helical transmembrane segment spans residues 124-144 (LASHMRWFIWLMAAGGTIYVF). At 145–151 (LYHEKYK) the chain is on the cytoplasmic side. The helical transmembrane segment at 152–172 (VVELFFYLTMGFSPALVVTSM) threads the bilayer. The Lumenal segment spans residues 173 to 174 (NN). The chain crosses the membrane as a helical span at residues 175-195 (TDGLQELACGGLIYCLGVVFF). The Cytoplasmic segment spans residues 196–198 (KSD). The helical transmembrane segment at 199–219 (GIIPFAHAIWHLFVATAAAVH) threads the bilayer. Over 220–238 (YYAIWKYLYRSPTDFIRHL) the chain is Lumenal.

It belongs to the ADIPOR family. In terms of tissue distribution, preferentially expressed in the brain.

It localises to the late endosome membrane. Its subcellular location is the lysosome membrane. Its function is as follows. Is involved in the dynamics of lysosomal membranes associated with microglial activation following brain lesion. The chain is Monocyte to macrophage differentiation factor from Rattus norvegicus (Rat).